A 243-amino-acid polypeptide reads, in one-letter code: Probable transcriptional regulatory protein BG0025 (243 aa).

The protein belongs to the TACO1 family.

Its subcellular location is the cytoplasm. The protein is Probable transcriptional regulatory protein BG0025 of Borrelia garinii subsp. bavariensis (strain ATCC BAA-2496 / DSM 23469 / PBi) (Borreliella bavariensis).